The sequence spans 345 residues: RNA polymerase II holoenzyme cyclin-like subunit (345 aa).

Residues 23 to 147 (ESRRKLLLLE…KLAEFEFYLI (125 aa)) enclose the Cyclin N-terminal domain.

The protein belongs to the cyclin family. Cyclin C subfamily. As to quaternary structure, component of the SRB8-11 complex, a regulatory module of the Mediator complex.

It is found in the nucleus. In terms of biological role, component of the SRB8-11 complex. The SRB8-11 complex is a regulatory module of the Mediator complex which is itself involved in regulation of basal and activated RNA polymerase II-dependent transcription. The SRB8-11 complex may be involved in the transcriptional repression of a subset of genes regulated by Mediator. It may inhibit the association of the Mediator complex with RNA polymerase II to form the holoenzyme complex. The SRB8-11 complex phosphorylates the C-terminal domain (CTD) of the largest subunit of RNA polymerase II. This chain is RNA polymerase II holoenzyme cyclin-like subunit (SSN8), found in Debaryomyces hansenii (strain ATCC 36239 / CBS 767 / BCRC 21394 / JCM 1990 / NBRC 0083 / IGC 2968) (Yeast).